Consider the following 255-residue polypeptide: Cullin-like protein 3 (255 aa).

It belongs to the cullin family.

This Arabidopsis thaliana (Mouse-ear cress) protein is Cullin-like protein 3.